Consider the following 370-residue polypeptide: MIRIAVDAMGGDIGPDVTLAASLAFLQAHPDAELLLVGQPEVLAAHSLHAQLVAHARCEIVAASEVVTMDDSIEIALRRKKNSSMRVAINQVKEGRAQVAVSGGNTGALMAIARYVLKTLEGIDRPAIASQLPNARGKATTMLDLGANVDCTEEHLLQFAVMGSALVAAIAEIPSPTVGLLNIGEEAIKGGDMIKKAGRLLRAASDSGDINFYGNVEGNDIFKGTTDLVVCDGFVGNVALKSSEGLAHMIGDYIKAEFSRNLLTKMAALVAYPVLSAFKKRFDHRRYNGAALLGLRGLVFKSHGSADVFAFEQALSRAYDAARNNLLERVRERIAHAAPLLVAARAALPAEEALAAPFMSVESTVSTPAH.

It belongs to the PlsX family. In terms of assembly, homodimer. Probably interacts with PlsY.

Its subcellular location is the cytoplasm. It carries out the reaction a fatty acyl-[ACP] + phosphate = an acyl phosphate + holo-[ACP]. It participates in lipid metabolism; phospholipid metabolism. Functionally, catalyzes the reversible formation of acyl-phosphate (acyl-PO(4)) from acyl-[acyl-carrier-protein] (acyl-ACP). This enzyme utilizes acyl-ACP as fatty acyl donor, but not acyl-CoA. The polypeptide is Phosphate acyltransferase (Polaromonas naphthalenivorans (strain CJ2)).